Here is a 192-residue protein sequence, read N- to C-terminus: Cytochrome c4 (192 aa).

Cytochrome c domains are found at residues 12–90 and 99–191; these read GDPQ…ATQP and ELAS…QGLS. 6 residues coordinate heme c: Cys-25, Cys-28, His-29, Cys-120, Cys-123, and His-124.

Post-translationally, binds 2 heme c groups covalently per subunit.

It localises to the periplasm. In terms of biological role, diheme, high potential cytochrome c believed to be an intermediate electron donor in an anaerobic electron transport chain. The protein is Cytochrome c4 of Thiocapsa roseopersicina.